Reading from the N-terminus, the 361-residue chain is Chorismate synthase (361 aa).

2 residues coordinate NADP(+): arginine 48 and arginine 54. Residues 125–127 (RSS), 238–239 (NA), glycine 278, 293–297 (KPTSS), and arginine 319 contribute to the FMN site.

Belongs to the chorismate synthase family. As to quaternary structure, homotetramer. FMNH2 is required as a cofactor.

It catalyses the reaction 5-O-(1-carboxyvinyl)-3-phosphoshikimate = chorismate + phosphate. It participates in metabolic intermediate biosynthesis; chorismate biosynthesis; chorismate from D-erythrose 4-phosphate and phosphoenolpyruvate: step 7/7. In terms of biological role, catalyzes the anti-1,4-elimination of the C-3 phosphate and the C-6 proR hydrogen from 5-enolpyruvylshikimate-3-phosphate (EPSP) to yield chorismate, which is the branch point compound that serves as the starting substrate for the three terminal pathways of aromatic amino acid biosynthesis. This reaction introduces a second double bond into the aromatic ring system. This Salmonella typhi protein is Chorismate synthase.